A 421-amino-acid chain; its full sequence is Putative B3 domain-containing protein Os08g0333500 (421 aa).

The TF-B3 DNA-binding region spans M1–K51. The tract at residues S92–T121 is disordered. Residues S95 to S107 show a composition bias toward basic and acidic residues. The span at M108–T121 shows a compositional bias: polar residues.

Its subcellular location is the nucleus. This chain is Putative B3 domain-containing protein Os08g0333500, found in Oryza sativa subsp. japonica (Rice).